The chain runs to 1043 residues: Phosphatidylinositol 4,5-bisphosphate 3-kinase catalytic subunit delta isoform (1043 aa).

Residues 16–105 (ESQSVVVDFL…LPVLRLVARE (90 aa)) enclose the PI3K-ABD domain. Positions 187–278 (NRALLVNVKF…GLTPHLTMVH (92 aa)) constitute a PI3K-RBD domain. Residues 287 to 312 (DEQSNPAPQVQKPRAKPPPIPAKKPS) are disordered. The C2 PI3K-type domain maps to 319 to 476 (LEQPFSIELI…SAAALVIYLP (158 aa)). Positions 496–673 (RHGERGRITE…GLIMEAYCRG (178 aa)) constitute a PIK helical domain. Tyrosine 523 carries the post-translational modification Phosphotyrosine. The region spanning 744–1026 (CVEQCTFMDS…KFNEALRESW (283 aa)) is the PI3K/PI4K catalytic domain. The tract at residues 750–756 (FMDSKMK) is G-loop. The interval 889–897 (GIGDRHSDN) is catalytic loop. The activation loop stretch occupies residues 908–934 (HIDFGHFLGNFKTKFGINRERVPFILT). Phosphoserine; by autocatalysis is present on serine 1038.

Belongs to the PI3/PI4-kinase family. In terms of assembly, heterodimer of a catalytic subunit PIK3CD and a p85 regulatory subunit (PIK3R1, PIK3R2 or PIK3R3). Interacts with ERAS and HRAS. In terms of processing, autophosphorylation on Ser-1038 results in the almost complete inactivation of the lipid kinase activity. In terms of tissue distribution, abundantly expressed in adult mouse spleen as well as in testis. Isoform 1 is expressed in spleen and lung (at protein level). Isoform 1 is expressed predominantly in leukocytes.

The protein localises to the cytoplasm. It carries out the reaction a 1,2-diacyl-sn-glycero-3-phospho-(1D-myo-inositol-4,5-bisphosphate) + ATP = a 1,2-diacyl-sn-glycero-3-phospho-(1D-myo-inositol-3,4,5-trisphosphate) + ADP + H(+). The enzyme catalyses a 1,2-diacyl-sn-glycero-3-phospho-(1D-myo-inositol) + ATP = a 1,2-diacyl-sn-glycero-3-phospho-(1D-myo-inositol-3-phosphate) + ADP + H(+). It catalyses the reaction 1-octadecanoyl-2-(5Z,8Z,11Z,14Z)-eicosatetraenoyl-sn-glycero-3-phospho-1D-myo-inositol 4,5-bisphosphate + ATP = 1-octadecanoyl-2-(5Z,8Z,11Z,14Z-eicosatetraenoyl)-sn-glycero-3-phospho-(1D-myo-inositol 3,4,5-triphosphate) + ADP + H(+). It functions in the pathway phospholipid metabolism; phosphatidylinositol phosphate biosynthesis. With respect to regulation, activated by growth factors and cytokine receptors through a tyrosine-kinase-dependent mechanism. Activated by RAS. IC87114 inhibits lipid kinase activity and is selective in cells at doses up to 5-10 uM. Among other effects, IC87114 reduces allergic responses, prevents the recruitment of antigen-specific T cells into target tissue, and affects natural killer cell chemotaxis. Functionally, phosphoinositide-3-kinase (PI3K) phosphorylates phosphatidylinositol (PI) and its phosphorylated derivatives at position 3 of the inositol ring to produce 3-phosphoinositides. Uses ATP and PtdIns(4,5)P2 (phosphatidylinositol 4,5-bisphosphate) to generate phosphatidylinositol 3,4,5-trisphosphate (PIP3). PIP3 plays a key role by recruiting PH domain-containing proteins to the membrane, including AKT1 and PDPK1, activating signaling cascades involved in cell growth, survival, proliferation, motility and morphology. Mediates immune responses. Plays a role in B-cell development, proliferation, migration, and function. Required for B-cell receptor (BCR) signaling. Mediates B-cell proliferation response to anti-IgM, anti-CD40 and IL4 stimulation. Promotes cytokine production in response to TLR4 and TLR9. Required for antibody class switch mediated by TLR9. Involved in the antigen presentation function of B-cells. Involved in B-cell chemotaxis in response to CXCL13 and sphingosine 1-phosphate (S1P). Required for proliferation, signaling and cytokine production of naive, effector and memory T-cells. Required for T-cell receptor (TCR) signaling. Mediates TCR signaling events at the immune synapse. Activation by TCR leads to antigen-dependent memory T-cell migration and retention to antigenic tissues. Together with PIK3CG participates in T-cell development. Contributes to T-helper cell expansion and differentiation. Required for T-cell migration mediated by homing receptors SELL/CD62L, CCR7 and S1PR1 and antigen dependent recruitment of T-cells. Together with PIK3CG is involved in natural killer (NK) cell development and migration towards the sites of inflammation. Participates in NK cell receptor activation. Plays a role in NK cell maturation and cytokine production. Together with PIK3CG is involved in neutrophil chemotaxis and extravasation. Together with PIK3CG participates in neutrophil respiratory burst. Plays important roles in mast-cell development and mast cell mediated allergic response. Involved in stem cell factor (SCF)-mediated proliferation, adhesion and migration. Required for allergen-IgE-induced degranulation and cytokine release. The lipid kinase activity is required for its biological function. In Mus musculus (Mouse), this protein is Phosphatidylinositol 4,5-bisphosphate 3-kinase catalytic subunit delta isoform (Pik3cd).